A 299-amino-acid polypeptide reads, in one-letter code: Nucleotide-binding protein Moth_0258 (299 aa).

14-21 is an ATP binding site; the sequence is GLSGAGKT. Residue 68–71 participates in GTP binding; sequence DIRG.

This sequence belongs to the RapZ-like family.

Functionally, displays ATPase and GTPase activities. The polypeptide is Nucleotide-binding protein Moth_0258 (Moorella thermoacetica (strain ATCC 39073 / JCM 9320)).